The chain runs to 215 residues: Ribose-5-phosphate isomerase A (215 aa).

Substrate-binding positions include 26 to 29 (TGST), 79 to 82 (DGAD), and 92 to 95 (KGGG). Catalysis depends on glutamate 101, which acts as the Proton acceptor. Lysine 119 serves as a coordination point for substrate.

The protein belongs to the ribose 5-phosphate isomerase family. As to quaternary structure, homodimer.

The catalysed reaction is aldehydo-D-ribose 5-phosphate = D-ribulose 5-phosphate. It participates in carbohydrate degradation; pentose phosphate pathway; D-ribose 5-phosphate from D-ribulose 5-phosphate (non-oxidative stage): step 1/1. Catalyzes the reversible conversion of ribose-5-phosphate to ribulose 5-phosphate. The protein is Ribose-5-phosphate isomerase A of Stenotrophomonas maltophilia (strain R551-3).